A 98-amino-acid polypeptide reads, in one-letter code: NADH-ubiquinone oxidoreductase chain 4L (98 aa).

Helical transmembrane passes span 1-21 (MSLV…GLLM), 29-49 (SLLC…LTIL), and 61-81 (IILL…LVMV).

Belongs to the complex I subunit 4L family. As to quaternary structure, core subunit of respiratory chain NADH dehydrogenase (Complex I) which is composed of 45 different subunits.

The protein resides in the mitochondrion inner membrane. The enzyme catalyses a ubiquinone + NADH + 5 H(+)(in) = a ubiquinol + NAD(+) + 4 H(+)(out). Core subunit of the mitochondrial membrane respiratory chain NADH dehydrogenase (Complex I) which catalyzes electron transfer from NADH through the respiratory chain, using ubiquinone as an electron acceptor. Part of the enzyme membrane arm which is embedded in the lipid bilayer and involved in proton translocation. The sequence is that of NADH-ubiquinone oxidoreductase chain 4L (MT-ND4L) from Muntiacus vuquangensis (Giant muntjac).